Reading from the N-terminus, the 432-residue chain is C2H2 type master regulator of conidiophore development brlA (432 aa).

Disordered stretches follow at residues 22-72 (SNEC…RTPG) and 238-260 (KQHS…ADTP). Positions 29–44 (TSSFSPLESPTPTPTS) are enriched in low complexity. 2 stretches are compositionally biased toward polar residues: residues 62–72 (LPNNTYERTPG) and 238–252 (KQHS…CSLG). C2H2-type zinc fingers lie at residues 320-344 (FKCK…MKSH) and 350-375 (HVCW…TKTH). Positions 388-432 (LDENSPDYDPEFRGQLTPDGRPIYGSKLDDPIPGAGDMSLDGWDE) are disordered.

It localises to the nucleus. In terms of biological role, brlA, abaA and wetA are pivotal regulators of conidiophore development and conidium maturation. They act individually and together to regulate their own expression and that of numerous other sporulation-specific genes. Binds promoters of target genes at brlA response elements (BREs) containing the conserved sequence 5'-(C/A)(A/G)AGGG(G/A)-3'. Controls the expression of the conidiophore-specific phenol oxidase ivoB. Controls the expression of the hydrophobin rodA. Mediates the developmental switch from the indeterminate, apical growth pattern of vegetative cells to the budding growth pattern of conidiophores. Expression of brlA leads to activation of abaA, wetA and stuA, cessation of vegetative growth, cellular vacuolization and spore formation. This Emericella nidulans (strain FGSC A4 / ATCC 38163 / CBS 112.46 / NRRL 194 / M139) (Aspergillus nidulans) protein is C2H2 type master regulator of conidiophore development brlA.